The sequence spans 186 residues: Ribosome maturation factor RimP (186 aa).

It belongs to the RimP family.

Its subcellular location is the cytoplasm. Functionally, required for maturation of 30S ribosomal subunits. In Rhizorhabdus wittichii (strain DSM 6014 / CCUG 31198 / JCM 15750 / NBRC 105917 / EY 4224 / RW1) (Sphingomonas wittichii), this protein is Ribosome maturation factor RimP.